Here is a 538-residue protein sequence, read N- to C-terminus: Chaperonin GroEL 1 (538 aa).

Residues Thr30–Pro33, Lys51, Asp87–Thr91, Gly415, Asn479–Ala481, and Asp495 contribute to the ATP site.

The protein belongs to the chaperonin (HSP60) family. Forms a cylinder of 14 subunits composed of two heptameric rings stacked back-to-back. Interacts with the co-chaperonin GroES.

Its subcellular location is the cytoplasm. It catalyses the reaction ATP + H2O + a folded polypeptide = ADP + phosphate + an unfolded polypeptide.. In terms of biological role, together with its co-chaperonin GroES, plays an essential role in assisting protein folding. The GroEL-GroES system forms a nano-cage that allows encapsulation of the non-native substrate proteins and provides a physical environment optimized to promote and accelerate protein folding. This chain is Chaperonin GroEL 1, found in Chromobacterium violaceum (strain ATCC 12472 / DSM 30191 / JCM 1249 / CCUG 213 / NBRC 12614 / NCIMB 9131 / NCTC 9757 / MK).